A 268-amino-acid polypeptide reads, in one-letter code: tRNA pseudouridine synthase A (268 aa).

Catalysis depends on aspartate 52, which acts as the Nucleophile. Tyrosine 110 contributes to the substrate binding site.

Belongs to the tRNA pseudouridine synthase TruA family. In terms of assembly, homodimer.

It carries out the reaction uridine(38/39/40) in tRNA = pseudouridine(38/39/40) in tRNA. In terms of biological role, formation of pseudouridine at positions 38, 39 and 40 in the anticodon stem and loop of transfer RNAs. The polypeptide is tRNA pseudouridine synthase A (Prochlorococcus marinus (strain MIT 9301)).